The chain runs to 1604 residues: Putative surface cell antigen sca2 (1604 aa).

Positions 1–33 are cleaved as a signal peptide; it reads MSLQNSHSKKYVLTFFMSTCLLTSSFLSTSARA. 3 disordered regions span residues 324-354, 554-603, and 1183-1240; these read TTKPFTKHSRTTTNTAGISSGVPFDTGRTKP, NVNN…SNPN, and QQEN…KSLL. Low complexity predominate over residues 554 to 564; it reads NVNNNSNKGQN. The segment covering 568-587 has biased composition (pro residues); it reads ILPPTPPLNGSMPPSPPPPL. Composition is skewed to basic and acidic residues over residues 1193-1213 and 1227-1240; these read SSTKDDPQPEDSNKKSEKSDS and SKNDKSSDDKKSLL. One can recognise an Autotransporter domain in the interval 1325–1604; it reads EASINRGVWI…QGLIKLKVNL (280 aa).

It localises to the cell outer membrane. The polypeptide is Putative surface cell antigen sca2 (sca2) (Rickettsia felis (strain ATCC VR-1525 / URRWXCal2) (Rickettsia azadi)).